Consider the following 223-residue polypeptide: Probable transaldolase (223 aa).

Catalysis depends on K86, which acts as the Schiff-base intermediate with substrate.

The protein belongs to the transaldolase family. Type 3B subfamily.

It is found in the cytoplasm. The enzyme catalyses D-sedoheptulose 7-phosphate + D-glyceraldehyde 3-phosphate = D-erythrose 4-phosphate + beta-D-fructose 6-phosphate. Its pathway is carbohydrate degradation; pentose phosphate pathway; D-glyceraldehyde 3-phosphate and beta-D-fructose 6-phosphate from D-ribose 5-phosphate and D-xylulose 5-phosphate (non-oxidative stage): step 2/3. Its function is as follows. Transaldolase is important for the balance of metabolites in the pentose-phosphate pathway. This is Probable transaldolase (tal) from Thermoplasma volcanium (strain ATCC 51530 / DSM 4299 / JCM 9571 / NBRC 15438 / GSS1).